The chain runs to 313 residues: Adhesin MafA 2 (313 aa).

Residues 1 to 14 form the signal peptide; the sequence is MKTLLLLIPLVLTA. C15 carries the N-palmitoyl cysteine lipid modification. C15 carries S-diacylglycerol cysteine lipidation. Residues 282–297 are compositionally biased toward polar residues; it reads GDTTAQNRPDFKQNNG. Positions 282-313 are disordered; that stretch reads GDTTAQNRPDFKQNNGKKPDVGNEVIRRRKGG.

It belongs to the MafA family.

It localises to the cell outer membrane. This is Adhesin MafA 2 (mafA2) from Neisseria meningitidis serogroup C / serotype 2a (strain ATCC 700532 / DSM 15464 / FAM18).